Reading from the N-terminus, the 89-residue chain is Small ribosomal subunit protein uS14A (89 aa).

Belongs to the universal ribosomal protein uS14 family. As to quaternary structure, part of the 30S ribosomal subunit. Contacts proteins S3 and S10.

Its function is as follows. Binds 16S rRNA, required for the assembly of 30S particles and may also be responsible for determining the conformation of the 16S rRNA at the A site. In Listeria welshimeri serovar 6b (strain ATCC 35897 / DSM 20650 / CCUG 15529 / CIP 8149 / NCTC 11857 / SLCC 5334 / V8), this protein is Small ribosomal subunit protein uS14A.